Reading from the N-terminus, the 1357-residue chain is DNA-directed RNA polymerase subunit beta (1357 aa).

It belongs to the RNA polymerase beta chain family. In terms of assembly, the RNAP catalytic core consists of 2 alpha, 1 beta, 1 beta' and 1 omega subunit. When a sigma factor is associated with the core the holoenzyme is formed, which can initiate transcription.

It catalyses the reaction RNA(n) + a ribonucleoside 5'-triphosphate = RNA(n+1) + diphosphate. In terms of biological role, DNA-dependent RNA polymerase catalyzes the transcription of DNA into RNA using the four ribonucleoside triphosphates as substrates. The polypeptide is DNA-directed RNA polymerase subunit beta (Pseudomonas entomophila (strain L48)).